A 560-amino-acid polypeptide reads, in one-letter code: Serine/threonine-protein kinase TOS3 (560 aa).

Positions 50–344 constitute a Protein kinase domain; that stretch reads FEILATLGNG…LADIKVHPFM (295 aa). ATP is bound by residues 56-64 and Lys-79; that span reads LGNGQYGKV. Asp-189 (proton acceptor) is an active-site residue.

It belongs to the protein kinase superfamily. Ser/Thr protein kinase family. Autophosphorylated.

The catalysed reaction is L-seryl-[protein] + ATP = O-phospho-L-seryl-[protein] + ADP + H(+). It carries out the reaction L-threonyl-[protein] + ATP = O-phospho-L-threonyl-[protein] + ADP + H(+). One of the three SNF1 protein kinases (with SAK1 and ELM1) which are required for growth on nonfermentable carbon sources and nonpreferred sugars and for response to environmental stress. Activates SNF1 by phosphorylation of its activation-loop 'Thr-210'. Required for the regulation by SNF1 of the transcription of a large set of genes, the modification the activity of metabolic enzymes, and the control of various nutrient-responsive cellular developmental processes. Also phosphorylates GAL83, MIG1 and SIP2. This Saccharomyces cerevisiae (strain YJM789) (Baker's yeast) protein is Serine/threonine-protein kinase TOS3 (TOS3).